Reading from the N-terminus, the 249-residue chain is UPF0246 protein EUBREC_1226 (249 aa).

The protein belongs to the UPF0246 family.

This Agathobacter rectalis (strain ATCC 33656 / DSM 3377 / JCM 17463 / KCTC 5835 / VPI 0990) (Eubacterium rectale) protein is UPF0246 protein EUBREC_1226.